Here is a 372-residue protein sequence, read N- to C-terminus: 4-hydroxy-3-methylbut-2-en-1-yl diphosphate synthase (flavodoxin) (372 aa).

C270, C273, C305, and E312 together coordinate [4Fe-4S] cluster.

Belongs to the IspG family. Requires [4Fe-4S] cluster as cofactor.

It carries out the reaction (2E)-4-hydroxy-3-methylbut-2-enyl diphosphate + oxidized [flavodoxin] + H2O + 2 H(+) = 2-C-methyl-D-erythritol 2,4-cyclic diphosphate + reduced [flavodoxin]. The protein operates within isoprenoid biosynthesis; isopentenyl diphosphate biosynthesis via DXP pathway; isopentenyl diphosphate from 1-deoxy-D-xylulose 5-phosphate: step 5/6. In terms of biological role, converts 2C-methyl-D-erythritol 2,4-cyclodiphosphate (ME-2,4cPP) into 1-hydroxy-2-methyl-2-(E)-butenyl 4-diphosphate. The polypeptide is 4-hydroxy-3-methylbut-2-en-1-yl diphosphate synthase (flavodoxin) (Alteromonas mediterranea (strain DSM 17117 / CIP 110805 / LMG 28347 / Deep ecotype)).